The primary structure comprises 221 residues: MESFRYHDLGRIAYADALEYQTAAFEVLLDAKATGKKEDNQLFFCEHLPVLTIGKSGKDSNLLIPEETLRERGVSFYHINRGGDITYHGPGQITGYPVFDLEYWNLGLKQYIHMLEETIIRFLSLYDLKGERLEGATGVWLDPEVPGRARKICAIGVKSSRFVTMHGFALNINTDLSYFSLINPCGFTDKGVTSLAMELGVPQDFELAKSQLRSIFMEIFA.

Positions 36 to 221 constitute a BPL/LPL catalytic domain; it reads KKEDNQLFFC…LRSIFMEIFA (186 aa). Substrate contacts are provided by residues 81 to 88, 154 to 156, and 167 to 169; these read RGGDITYH, AIG, and GFA. The active-site Acyl-thioester intermediate is cysteine 185.

The protein belongs to the LipB family.

Its subcellular location is the cytoplasm. It carries out the reaction octanoyl-[ACP] + L-lysyl-[protein] = N(6)-octanoyl-L-lysyl-[protein] + holo-[ACP] + H(+). It functions in the pathway protein modification; protein lipoylation via endogenous pathway; protein N(6)-(lipoyl)lysine from octanoyl-[acyl-carrier-protein]: step 1/2. Its function is as follows. Catalyzes the transfer of endogenously produced octanoic acid from octanoyl-acyl-carrier-protein onto the lipoyl domains of lipoate-dependent enzymes. Lipoyl-ACP can also act as a substrate although octanoyl-ACP is likely to be the physiological substrate. This chain is Octanoyltransferase, found in Parabacteroides distasonis (strain ATCC 8503 / DSM 20701 / CIP 104284 / JCM 5825 / NCTC 11152).